The chain runs to 199 residues: Ribosome maturation factor RimM (199 aa).

Residues 95-168 (EDEFYHADLV…FVRVDPVAAG (74 aa)) enclose the PRC barrel domain. The interval 167–199 (AGLVEDEDGDAPREEDFDPKGRPRGPRDAGGNR) is disordered. Positions 176 to 193 (DAPREEDFDPKGRPRGPR) are enriched in basic and acidic residues.

It belongs to the RimM family. In terms of assembly, binds ribosomal protein uS19.

It localises to the cytoplasm. An accessory protein needed during the final step in the assembly of 30S ribosomal subunit, possibly for assembly of the head region. Essential for efficient processing of 16S rRNA. May be needed both before and after RbfA during the maturation of 16S rRNA. It has affinity for free ribosomal 30S subunits but not for 70S ribosomes. The chain is Ribosome maturation factor RimM from Mesorhizobium japonicum (strain LMG 29417 / CECT 9101 / MAFF 303099) (Mesorhizobium loti (strain MAFF 303099)).